Reading from the N-terminus, the 332-residue chain is Transcription factor ZEB2 (332 aa).

Residues 1 to 37 (MQSTESFHALPTRSDVEDPNERRKIQNRIAQKKHRQK) are disordered. The segment covering 14–24 (SDVEDPNERRK) has biased composition (basic and acidic residues). The 34-residue stretch at 17 to 50 (EDPNERRKIQNRIAQKKHRQKMKRRIEELETKVN) folds into the bZIP domain. The segment at 21–43 (ERRKIQNRIAQKKHRQKMKRRIE) is basic motif. The tract at residues 45 to 52 (LETKVNNQ) is leucine-zipper. The segment at 106–170 (MHDSPRPNQQ…EGSLPTRQHD (65 aa)) is disordered. The segment covering 111 to 134 (RPNQQQRLSVSGMPSSPTSTSNVA) has biased composition (polar residues). The segment covering 143–155 (HSSASNHLSSLSL) has biased composition (low complexity). Residues 160-170 (TEGSLPTRQHD) show a composition bias toward polar residues.

This sequence belongs to the bZIP family.

It is found in the nucleus. In terms of biological role, transcription factor that specifically controls transcription of the zearalenone biosynthesis cluster genes. The chain is Transcription factor ZEB2 from Gibberella zeae (strain ATCC MYA-4620 / CBS 123657 / FGSC 9075 / NRRL 31084 / PH-1) (Wheat head blight fungus).